The sequence spans 404 residues: N-acetylglucosamine-6-phosphate deacetylase (404 aa).

A divalent metal cation is bound at residue Glu143. 154–155 (AH) contributes to the substrate binding site. A divalent metal cation-binding residues include His211 and His232. Substrate contacts are provided by residues 235–236 (NA), Arg243, and 269–272 (DGIH). Asp294 (proton donor/acceptor) is an active-site residue. A substrate-binding site is contributed by 328–330 (LSG).

It belongs to the metallo-dependent hydrolases superfamily. NagA family. A divalent metal cation is required as a cofactor.

The enzyme catalyses N-acetyl-D-glucosamine 6-phosphate + H2O = D-glucosamine 6-phosphate + acetate. It functions in the pathway amino-sugar metabolism; N-acetylneuraminate degradation. In terms of biological role, hydrolyzes the N-glycolyl group from N-glycolylglucosamine 6-phosphate (GlcNGc-6-P) in the N-glycolylneuraminic acid (Neu5Gc) degradation pathway. In Danio rerio (Zebrafish), this protein is N-acetylglucosamine-6-phosphate deacetylase (amdhd2).